A 321-amino-acid chain; its full sequence is Lipoyl synthase (321 aa).

Positions 68, 73, 79, 94, 98, 101, and 308 each coordinate [4Fe-4S] cluster. A Radical SAM core domain is found at 80–297; that stretch reads FNHGTATFMI…KVLADELGFT (218 aa).

Belongs to the radical SAM superfamily. Lipoyl synthase family. [4Fe-4S] cluster is required as a cofactor.

Its subcellular location is the cytoplasm. It carries out the reaction [[Fe-S] cluster scaffold protein carrying a second [4Fe-4S](2+) cluster] + N(6)-octanoyl-L-lysyl-[protein] + 2 oxidized [2Fe-2S]-[ferredoxin] + 2 S-adenosyl-L-methionine + 4 H(+) = [[Fe-S] cluster scaffold protein] + N(6)-[(R)-dihydrolipoyl]-L-lysyl-[protein] + 4 Fe(3+) + 2 hydrogen sulfide + 2 5'-deoxyadenosine + 2 L-methionine + 2 reduced [2Fe-2S]-[ferredoxin]. Its pathway is protein modification; protein lipoylation via endogenous pathway; protein N(6)-(lipoyl)lysine from octanoyl-[acyl-carrier-protein]: step 2/2. In terms of biological role, catalyzes the radical-mediated insertion of two sulfur atoms into the C-6 and C-8 positions of the octanoyl moiety bound to the lipoyl domains of lipoate-dependent enzymes, thereby converting the octanoylated domains into lipoylated derivatives. The chain is Lipoyl synthase from Shewanella sp. (strain MR-7).